Consider the following 320-residue polypeptide: uncharacterized protein (320 aa).

Transmembrane regions (helical) follow at residues Phe24–Ile44, Phe65–Leu85, Thr105–Val125, Ser132–Leu152, Ile179–Phe199, Met226–Tyr246, and Thr253–Leu275.

It is found in the membrane. This is an uncharacterized protein from Caenorhabditis elegans.